We begin with the raw amino-acid sequence, 347 residues long: NADH-quinone oxidoreductase subunit H (347 aa).

The next 8 helical transmembrane spans lie at 14 to 34 (IMIG…AYIL), 82 to 102 (AVFL…WAVI), 115 to 135 (VGIL…IMGG), 161 to 181 (IGFV…TDIV), 198 to 218 (LLDW…ISAL), 258 to 278 (AIVL…LPPL), 285 to 305 (WVPG…MFGI), and 321 to 341 (LGWK…AFVL).

This sequence belongs to the complex I subunit 1 family. In terms of assembly, NDH-1 is composed of 14 different subunits. Subunits NuoA, H, J, K, L, M, N constitute the membrane sector of the complex.

It is found in the cell inner membrane. It carries out the reaction a quinone + NADH + 5 H(+)(in) = a quinol + NAD(+) + 4 H(+)(out). Functionally, NDH-1 shuttles electrons from NADH, via FMN and iron-sulfur (Fe-S) centers, to quinones in the respiratory chain. The immediate electron acceptor for the enzyme in this species is believed to be ubiquinone. Couples the redox reaction to proton translocation (for every two electrons transferred, four hydrogen ions are translocated across the cytoplasmic membrane), and thus conserves the redox energy in a proton gradient. This subunit may bind ubiquinone. This chain is NADH-quinone oxidoreductase subunit H, found in Allorhizobium ampelinum (strain ATCC BAA-846 / DSM 112012 / S4) (Agrobacterium vitis (strain S4)).